Reading from the N-terminus, the 150-residue chain is UPF0178 protein DMR_20710 (150 aa).

It belongs to the UPF0178 family.

This chain is UPF0178 protein DMR_20710, found in Solidesulfovibrio magneticus (strain ATCC 700980 / DSM 13731 / RS-1) (Desulfovibrio magneticus).